The primary structure comprises 227 residues: Phosphatidylethanolamine-binding protein 4 (227 aa).

The first 22 residues, 1-22 (MGWTMRLVTAALLLGLMMVVTG), serve as a signal peptide directing secretion. N-linked (GlcNAc...) (complex) asparagine glycosylation is present at Asn169. The important for secretion stretch occupies residues 188–227 (EPEASTQFMTQNYQDSPTLQAPRERASEPKHKNQAEIAAC). The disordered stretch occupies residues 202–227 (DSPTLQAPRERASEPKHKNQAEIAAC). A compositionally biased stretch (basic and acidic residues) spans 209–221 (PRERASEPKHKNQ).

Belongs to the phosphatidylethanolamine-binding protein family.

The protein localises to the secreted. Promotes AKT phosphorylation, suggesting a possible role in the PI3K-AKT signaling pathway. In Homo sapiens (Human), this protein is Phosphatidylethanolamine-binding protein 4 (PEBP4).